Reading from the N-terminus, the 183-residue chain is ATP synthase subunit b 2 (183 aa).

The helical transmembrane segment at 27 to 47 (PSFYAFLALLIFFGLLLHMGV) threads the bilayer.

This sequence belongs to the ATPase B chain family. As to quaternary structure, F-type ATPases have 2 components, F(1) - the catalytic core - and F(0) - the membrane proton channel. F(1) has five subunits: alpha(3), beta(3), gamma(1), delta(1), epsilon(1). F(0) has three main subunits: a(1), b(2) and c(10-14). The alpha and beta chains form an alternating ring which encloses part of the gamma chain. F(1) is attached to F(0) by a central stalk formed by the gamma and epsilon chains, while a peripheral stalk is formed by the delta and b chains.

The protein localises to the cell inner membrane. Functionally, f(1)F(0) ATP synthase produces ATP from ADP in the presence of a proton or sodium gradient. F-type ATPases consist of two structural domains, F(1) containing the extramembraneous catalytic core and F(0) containing the membrane proton channel, linked together by a central stalk and a peripheral stalk. During catalysis, ATP synthesis in the catalytic domain of F(1) is coupled via a rotary mechanism of the central stalk subunits to proton translocation. Its function is as follows. Component of the F(0) channel, it forms part of the peripheral stalk, linking F(1) to F(0). This is ATP synthase subunit b 2 from Maricaulis maris (strain MCS10) (Caulobacter maris).